Here is a 554-residue protein sequence, read N- to C-terminus: MIEPHAPAPPGSPPSWGGPCGPEAPARLPVRPAVGRFLVLAGVFVCAACGLVYELELVALASYLIGDSVTQASVVLSVMVFAMGLGSLAAKRLRGLAAAGFGALEAALALVGGSSAMLLYAVFAWTGGWGGLWADGPRILLVAFSLAIGVLIGAEVPLLMELIQRVRRQDPGGAVADLFAADYVGALVGGLAFPFVLLPFLGQLTGALLTGTVNAVVGAALVLGLFRRDLTRRARWLLLTANAVVLALLATATVLADDFERAARHAVYGQDVRVAVRTGVQEVVLTGDADGRPLDLFLDGRLRVRGSDERSYHEALVHPAMGGPHARVLILGGGDGLAAREVLRHPGVRRVDVLEADPGLARLARHDPGLSTLNEHAYGDARVRVLSGDAFHRLRATPSATYDVVISDLPDPGVTASTKLYSQEFYGLLRRVLAPDGRLAVHAGPVDARPRAFWTVDATLRAAGLPAVAYRVGARDTGPGPGSVPGPRRAAAGPPAPRGWGFLLAARTAPAPRLDPAAPRPHSLTPDSLARGVREAARTQMAGLPPSTLVHPRF.

A compositionally biased stretch (pro residues) spans 1 to 13; that stretch reads MIEPHAPAPPGSP. Residues 1-20 form a disordered region; the sequence is MIEPHAPAPPGSPPSWGGPC. A run of 6 helical transmembrane segments spans residues 37-57, 69-89, 106-126, 139-159, 184-204, and 206-226; these read FLVL…ELEL, VTQA…GSLA, AALA…FAWT, ILLV…VPLL, VGAL…LGQL, and GALL…LGLF. The spermidine synthase stretch occupies residues 235-516; it reads RWLLLTANAV…RTAPAPRLDP (282 aa). The PABS domain occupies 247 to 492; sequence ALLATATVLA…SVPGPRRAAA (246 aa). Residue Gln-281 participates in S-methyl-5'-thioadenosine binding. Spermidine-binding residues include His-313 and Asp-335. S-methyl-5'-thioadenosine is bound by residues Glu-355 and 389–390; that span reads DA. Catalysis depends on Asp-408, which acts as the Proton acceptor. The interval 476 to 495 is disordered; that stretch reads DTGPGPGSVPGPRRAAAGPP. Positions 485-495 are enriched in low complexity; it reads PGPRRAAAGPP.

Belongs to the spermidine/spermine synthase family. In terms of assembly, homodimer or homotetramer.

The protein resides in the cell membrane. The enzyme catalyses S-adenosyl 3-(methylsulfanyl)propylamine + putrescine = S-methyl-5'-thioadenosine + spermidine + H(+). Its pathway is amine and polyamine biosynthesis; spermidine biosynthesis; spermidine from putrescine: step 1/1. Functionally, catalyzes the irreversible transfer of a propylamine group from the amino donor S-adenosylmethioninamine (decarboxy-AdoMet) to putrescine (1,4-diaminobutane) to yield spermidine. The sequence is that of Polyamine aminopropyltransferase 2 from Streptomyces coelicolor (strain ATCC BAA-471 / A3(2) / M145).